Consider the following 587-residue polypeptide: Phosphomethylpyrimidine synthase (587 aa).

Substrate-binding positions include N218, M247, Y276, H312, 332-334, 373-376, and E412; these read SRG and DGLR. H416 lines the Zn(2+) pocket. Y439 provides a ligand contact to substrate. H480 is a Zn(2+) binding site. Positions 560, 563, and 568 each coordinate [4Fe-4S] cluster.

Belongs to the ThiC family. [4Fe-4S] cluster is required as a cofactor.

The catalysed reaction is 5-amino-1-(5-phospho-beta-D-ribosyl)imidazole + S-adenosyl-L-methionine = 4-amino-2-methyl-5-(phosphooxymethyl)pyrimidine + CO + 5'-deoxyadenosine + formate + L-methionine + 3 H(+). It functions in the pathway cofactor biosynthesis; thiamine diphosphate biosynthesis. Its function is as follows. Catalyzes the synthesis of the hydroxymethylpyrimidine phosphate (HMP-P) moiety of thiamine from aminoimidazole ribotide (AIR) in a radical S-adenosyl-L-methionine (SAM)-dependent reaction. This chain is Phosphomethylpyrimidine synthase, found in Porphyromonas gingivalis (strain ATCC BAA-308 / W83).